A 137-amino-acid chain; its full sequence is MKLNLYVLTPKRIIWDCEVKEIILSTNSGQIGVLPNHAPINTAVDMGPLRIRLLNDQWLTAVLWSGFARIVNNEIIILGNDAELGSDIDPEEAQQALEIAEANVSRAEGTKELVEAKVALRRARIRVEAVNWIPPSN.

This sequence belongs to the ATPase epsilon chain family. F-type ATPases have 2 components, CF(1) - the catalytic core - and CF(0) - the membrane proton channel. CF(1) has five subunits: alpha(3), beta(3), gamma(1), delta(1), epsilon(1). CF(0) has three main subunits: a, b and c.

It localises to the plastid. The protein resides in the chloroplast thylakoid membrane. In terms of biological role, produces ATP from ADP in the presence of a proton gradient across the membrane. The sequence is that of ATP synthase epsilon chain, chloroplastic from Oryza nivara (Indian wild rice).